A 378-amino-acid polypeptide reads, in one-letter code: Queuine tRNA-ribosyltransferase (378 aa).

Residue D92 is the Proton acceptor of the active site. Residues 92-96 (DSGGF), D146, Q188, and G215 each bind substrate. The tract at residues 246-252 (GVGTHLE) is RNA binding. The active-site Nucleophile is the D265. An RNA binding; important for wobble base 34 recognition region spans residues 270-274 (TRLAR). The Zn(2+) site is built by C303, C305, C308, and H334.

It belongs to the queuine tRNA-ribosyltransferase family. Homodimer. Within each dimer, one monomer is responsible for RNA recognition and catalysis, while the other monomer binds to the replacement base PreQ1. It depends on Zn(2+) as a cofactor.

It catalyses the reaction 7-aminomethyl-7-carbaguanine + guanosine(34) in tRNA = 7-aminomethyl-7-carbaguanosine(34) in tRNA + guanine. It participates in tRNA modification; tRNA-queuosine biosynthesis. Its function is as follows. Catalyzes the base-exchange of a guanine (G) residue with the queuine precursor 7-aminomethyl-7-deazaguanine (PreQ1) at position 34 (anticodon wobble position) in tRNAs with GU(N) anticodons (tRNA-Asp, -Asn, -His and -Tyr). Catalysis occurs through a double-displacement mechanism. The nucleophile active site attacks the C1' of nucleotide 34 to detach the guanine base from the RNA, forming a covalent enzyme-RNA intermediate. The proton acceptor active site deprotonates the incoming PreQ1, allowing a nucleophilic attack on the C1' of the ribose to form the product. After dissociation, two additional enzymatic reactions on the tRNA convert PreQ1 to queuine (Q), resulting in the hypermodified nucleoside queuosine (7-(((4,5-cis-dihydroxy-2-cyclopenten-1-yl)amino)methyl)-7-deazaguanosine). This is Queuine tRNA-ribosyltransferase from Thermosynechococcus vestitus (strain NIES-2133 / IAM M-273 / BP-1).